A 390-amino-acid chain; its full sequence is Homoserine O-acetyltransferase (390 aa).

The region spanning 55–366 is the AB hydrolase-1 domain; it reads NAILINHAFS…ESDCGHDAFL (312 aa). Catalysis depends on serine 163, which acts as the Nucleophile. Substrate is bound at residue arginine 232. Catalysis depends on residues aspartate 329 and histidine 362. Residue aspartate 363 coordinates substrate.

Belongs to the AB hydrolase superfamily. MetX family. As to quaternary structure, homodimer.

It localises to the cytoplasm. It catalyses the reaction L-homoserine + acetyl-CoA = O-acetyl-L-homoserine + CoA. It participates in amino-acid biosynthesis; L-methionine biosynthesis via de novo pathway; O-acetyl-L-homoserine from L-homoserine: step 1/1. Its function is as follows. Transfers an acetyl group from acetyl-CoA to L-homoserine, forming acetyl-L-homoserine. The polypeptide is Homoserine O-acetyltransferase (Desulfotalea psychrophila (strain LSv54 / DSM 12343)).